Consider the following 399-residue polypeptide: Exodeoxyribonuclease 7 large subunit (399 aa).

Belongs to the XseA family. In terms of assembly, heterooligomer composed of large and small subunits.

It is found in the cytoplasm. The enzyme catalyses Exonucleolytic cleavage in either 5'- to 3'- or 3'- to 5'-direction to yield nucleoside 5'-phosphates.. In terms of biological role, bidirectionally degrades single-stranded DNA into large acid-insoluble oligonucleotides, which are then degraded further into small acid-soluble oligonucleotides. This Clostridium beijerinckii (strain ATCC 51743 / NCIMB 8052) (Clostridium acetobutylicum) protein is Exodeoxyribonuclease 7 large subunit.